The following is a 391-amino-acid chain: Multidrug resistance protein MdtL (391 aa).

Over 1–3 (MSR) the chain is Cytoplasmic. Residues 4-24 (FLICSFALVLLYPAGIDMYLV) traverse the membrane as a helical segment. Topologically, residues 25-37 (GLPRIAADLNASE) are periplasmic. A helical membrane pass occupies residues 38-58 (AQLHIAFSVYLAGMAAAMLFA). At 59-75 (GKMADRSGRKPVAIPGS) the chain is on the cytoplasmic side. A helical membrane pass occupies residues 76 to 96 (ALFIIASVFCSLAETSTLFLA). Topologically, residues 97 to 98 (GR) are periplasmic. A helical membrane pass occupies residues 99 to 119 (FLQGLGAGCCYVVAFAILRDT). Topologically, residues 120–130 (LDDRRRAKVLS) are cytoplasmic. Residues 131-151 (LLNGITCIIPVLAPVLGHLIM) form a helical membrane-spanning segment. The Periplasmic portion of the chain corresponds to 152–157 (LKFPWQ). A helical transmembrane segment spans residues 158-178 (SLFWAMAMMGIAVLMLSLFIL). Topologically, residues 179 to 202 (KETRPASPAASDKPRENSESLLNR) are cytoplasmic. The helical transmembrane segment at 203 to 222 (FFLSRVVITTLSVSVILTFV) threads the bilayer. The Periplasmic segment spans residues 223–244 (NTSPVLLMEIMGFERGEYATIM). A helical membrane pass occupies residues 245-265 (ALTAGVSMTFSFSTPFALGIF). The Cytoplasmic portion of the chain corresponds to 266–268 (KPR). A helical transmembrane segment spans residues 269–289 (TLMITSQVLFLAAGITLAVSP). The Periplasmic segment spans residues 290-292 (SHA). A helical transmembrane segment spans residues 293-313 (VSLFGITLICAGFSVGFGVAM). At 314–330 (SQALGPFSLRAGVASST) the chain is on the cytoplasmic side. The chain crosses the membrane as a helical span at residues 331–351 (LGIAQVCGSSLWIWLAAVVGI). Topologically, residues 352 to 355 (GAWN) are periplasmic. A helical membrane pass occupies residues 356–376 (MLIGILIACSIVSLLLIMFVA). Over 377-391 (PGRPVAAHEEIHHHA) the chain is Cytoplasmic.

It belongs to the major facilitator superfamily. DHA1 family. MdtL (TC 2.A.1.2.22) subfamily.

Its subcellular location is the cell inner membrane. The polypeptide is Multidrug resistance protein MdtL (Shigella flexneri serotype 5b (strain 8401)).